The chain runs to 315 residues: Eukaryotic translation initiation factor 2 subunit 1 (315 aa).

The 72-residue stretch at 17–88 (EDVVMVNVRS…EKGYIDLSKR (72 aa)) folds into the S1 motif domain. A Phosphoserine; by HRI modification is found at S49. Position 52 is a phosphoserine (S52). K141 carries the post-translational modification N6-acetyllysine. S158 is subject to Phosphoserine. 2 positions are modified to phosphothreonine: T279 and T281. Residues 292-315 (RLERENAEVDGDDDAEEMEAKAED) form a disordered region. The span at 299–308 (EVDGDDDAEE) shows a compositional bias: acidic residues.

Belongs to the eIF-2-alpha family. Eukaryotic translation initiation factor 2 eIF2 is a heterotrimeric complex composed of an alpha (EIF2S1), a beta (EIF2S2) and a gamma (EIF2S3) chain. eIF2 is member of the 43S pre-initiation complex (43S PIC). eIF2 forms a complex with at least CELF1/CUGBP1, CALR, CALR3, EIF2S1, EIF2S2, HSP90B1 and HSPA5. Interaction with METAP2 protects EIF2S1 from inhibitory phosphorylation. Interacts with ABCF1. Associates with ribosomes. Interacts with DDX3X in an RNA-independent manner. In terms of processing, phosphorylation at Ser-49 and Ser-52 stabilizes the eIF-2/GDP/eIF2B complex and prevents GDP/GTP exchange reaction, thus impairing the recycling of eIF-2 between successive rounds of initiation and leading to global inhibition of translation, while concomitantly initiating the preferential translation of integrated stress response (ISR)-specific mRNAs. Substrate for at least 4 kinases: EIF2AK1/HRI, EIF2AK2/PKR, EIF2AK3/PERK and EIF2AK4/GCN2. Phosphorylation at Ser-52 by the EIF2AK3/PERK protein kinase occurs in response to the unfolded protein response. Phosphorylation on Ser-52 by the EIF2AK4/GCN2 protein kinase occurs in response to amino acid starvation and UV irradiation. Phosphorylation at Ser-52 by EIF2AK1/HRI in response to mitochondrial damage promotes relocalization to the mitochondrial surface.

Its subcellular location is the cytoplasm. It is found in the stress granule. The protein localises to the cytosol. The protein resides in the mitochondrion. With respect to regulation, activity is regulated by phosphorylation at Ser-49 and Ser-52, which stabilizes the eIF2/GDP/eIF2B complex and prevents the eIF2B-mediated exchange of GDP for GTP, thereby preventing the formation of the 43S pre-initiation complex (43S PIC). This results in the global attenuation of 5' cap-dependent protein synthesis and concomitant translation of ISR-specific mRNAs that contain a short upstream open reading frame (uORF) in their 5' UTR, such as ATF4, ATF5, DDIT3/CHOP and PPP1R15A/GADD34. Functionally, member of the eIF2 complex that functions in the early steps of protein synthesis by forming a ternary complex with GTP and initiator tRNA. This complex binds to a 40S ribosomal subunit, followed by mRNA binding to form a 43S pre-initiation complex. Junction of the 60S ribosomal subunit to form the 80S initiation complex is preceded by hydrolysis of the GTP bound to eIF2 and release of an eIF2-GDP binary complex. In order for eIF2 to recycle and catalyze another round of initiation, the GDP bound to eIF2 must exchange with GTP by way of a reaction catalyzed by eIF2B. EIF2S1/eIF2-alpha is a key component of the integrated stress response (ISR), required for adaptation to various stress: phosphorylation by metabolic-stress sensing protein kinases (EIF2AK1/HRI, EIF2AK2/PKR, EIF2AK3/PERK and EIF2AK4/GCN2) in response to stress converts EIF2S1/eIF2-alpha in a global protein synthesis inhibitor, leading to a attenuation of cap-dependent translation, while concomitantly initiating the preferential translation of ISR-specific mRNAs, such as the transcriptional activators ATF4 and QRICH1, and hence allowing ATF4- and QRICH1-mediated reprogramming. EIF2S1/eIF2-alpha also acts as an activator of mitophagy in response to mitochondrial damage: phosphorylation by EIF2AK1/HRI promotes relocalization to the mitochondrial surface, thereby triggering PRKN-independent mitophagy. The protein is Eukaryotic translation initiation factor 2 subunit 1 (EIF2S1) of Sus scrofa (Pig).